Reading from the N-terminus, the 316-residue chain is Methionyl-tRNA formyltransferase (316 aa).

111–114 is a (6S)-5,6,7,8-tetrahydrofolate binding site; it reads GLLP.

The protein belongs to the Fmt family.

The catalysed reaction is L-methionyl-tRNA(fMet) + (6R)-10-formyltetrahydrofolate = N-formyl-L-methionyl-tRNA(fMet) + (6S)-5,6,7,8-tetrahydrofolate + H(+). In terms of biological role, attaches a formyl group to the free amino group of methionyl-tRNA(fMet). The formyl group appears to play a dual role in the initiator identity of N-formylmethionyl-tRNA by promoting its recognition by IF2 and preventing the misappropriation of this tRNA by the elongation apparatus. The chain is Methionyl-tRNA formyltransferase from Chlamydia trachomatis serovar L2b (strain UCH-1/proctitis).